The primary structure comprises 159 residues: Phosphopantetheine adenylyltransferase (159 aa).

Thr9 is a binding site for substrate. Residues 9–10 (TF) and His17 contribute to the ATP site. Residues Lys41, Leu73, and Arg87 each coordinate substrate. ATP-binding positions include 88–90 (GLR), Glu98, and 123–129 (YSFISST).

This sequence belongs to the bacterial CoaD family. In terms of assembly, homohexamer. Mg(2+) is required as a cofactor.

It localises to the cytoplasm. It catalyses the reaction (R)-4'-phosphopantetheine + ATP + H(+) = 3'-dephospho-CoA + diphosphate. The protein operates within cofactor biosynthesis; coenzyme A biosynthesis; CoA from (R)-pantothenate: step 4/5. Reversibly transfers an adenylyl group from ATP to 4'-phosphopantetheine, yielding dephospho-CoA (dPCoA) and pyrophosphate. The sequence is that of Phosphopantetheine adenylyltransferase from Pseudomonas aeruginosa (strain LESB58).